The following is a 254-amino-acid chain: Uracil-DNA glycosylase (254 aa).

Asp-91 functions as the Proton acceptor in the catalytic mechanism.

This sequence belongs to the uracil-DNA glycosylase (UDG) superfamily. UNG family.

The protein resides in the host nucleus. It carries out the reaction Hydrolyzes single-stranded DNA or mismatched double-stranded DNA and polynucleotides, releasing free uracil.. Excises uracil residues from the DNA which can arise as a result of misincorporation of dUMP residues by DNA polymerase or deamination of cytosines. Therefore may reduce deleterious uracil incorporation into the viral genome, particularly in terminally differentiated cells which lack DNA repair enzymes. The sequence is that of Uracil-DNA glycosylase (U81) from Homo sapiens (Human).